The primary structure comprises 294 residues: NADH-cytochrome b5 reductase 1 (294 aa).

A helical membrane pass occupies residues Pro-18–Leu-38. The 104-residue stretch at Asp-51–Thr-154 folds into the FAD-binding FR-type domain. Residues Ala-134–Gly-149 and Ser-160–Leu-192 contribute to the FAD site.

Belongs to the flavoprotein pyridine nucleotide cytochrome reductase family. Monomer. Component of the 2-(3-amino-3-carboxypropyl)histidine synthase complex composed of DPH1, DPH2, DPH3 and a NADH-dependent reductase, predominantly CBR1. FAD serves as cofactor.

It is found in the mitochondrion outer membrane. The enzyme catalyses 2 Fe(III)-[cytochrome b5] + NADH = 2 Fe(II)-[cytochrome b5] + NAD(+) + H(+). It carries out the reaction 2 Fe(3+)-[Dph3] + NADH = 2 Fe(2+)-[Dph3] + NAD(+) + H(+). It participates in protein modification; peptidyl-diphthamide biosynthesis. Its function is as follows. NADH-dependent reductase for DPH3 and cytochrome b5. Required for the first step of diphthamide biosynthesis, a post-translational modification of histidine which occurs in elongation factor 2. DPH1 and DPH2 transfer a 3-amino-3-carboxypropyl (ACP) group from S-adenosyl-L-methionine (SAM) to a histidine residue, the reaction is assisted by a reduction system comprising DPH3 and a NADH-dependent reductase, predominantly CBR1. By reducing DPH3, also involved in the formation of the tRNA wobble base modification mcm5s 2U (5-methoxycarbonylmethyl-2-thiouridine), mediated by the elongator complex. The cytochrome b5/NADH cytochrome b5 reductase electron transfer system supports the catalytic activity of several sterol biosynthetic enzymes. In Candida albicans (strain SC5314 / ATCC MYA-2876) (Yeast), this protein is NADH-cytochrome b5 reductase 1 (CBR1).